Reading from the N-terminus, the 658-residue chain is Glycogen debranching enzyme (658 aa).

The Nucleophile role is filled by Asp-336. The active-site Proton donor is the Glu-371. Residues 459–484 are disordered; that stretch reads EANGEENRDGTNSNYSDNHGKEGLGG.

It belongs to the glycosyl hydrolase 13 family.

It carries out the reaction Hydrolysis of (1-&gt;6)-alpha-D-glucosidic linkages to branches with degrees of polymerization of three or four glucose residues in limit dextrin.. The protein operates within glycan degradation; glycogen degradation. In terms of biological role, removes maltotriose and maltotetraose chains that are attached by 1,6-alpha-linkage to the limit dextrin main chain, generating a debranched limit dextrin. The protein is Glycogen debranching enzyme of Salmonella enteritidis PT4 (strain P125109).